A 290-amino-acid polypeptide reads, in one-letter code: ATP synthase gamma chain (290 aa).

Belongs to the ATPase gamma chain family. F-type ATPases have 2 components, CF(1) - the catalytic core - and CF(0) - the membrane proton channel. CF(1) has five subunits: alpha(3), beta(3), gamma(1), delta(1), epsilon(1). CF(0) has three main subunits: a, b and c.

Its subcellular location is the cell membrane. Produces ATP from ADP in the presence of a proton gradient across the membrane. The gamma chain is believed to be important in regulating ATPase activity and the flow of protons through the CF(0) complex. The protein is ATP synthase gamma chain of Buchnera aphidicola subsp. Schlechtendalia chinensis.